We begin with the raw amino-acid sequence, 67 residues long: Large ribosomal subunit protein uL29 (67 aa).

This sequence belongs to the universal ribosomal protein uL29 family.

The sequence is that of Large ribosomal subunit protein uL29 from Magnetococcus marinus (strain ATCC BAA-1437 / JCM 17883 / MC-1).